Consider the following 558-residue polypeptide: EF-hand and coiled-coil domain-containing protein 1 (558 aa).

In terms of domain architecture, EF-hand spans 43–78 (GLDQYLQEVFHHLDCRGAGRLPRADFRALCAVLGLN). The segment covering 161–170 (LRRPRRRRRP) has biased composition (basic residues). Disordered regions lie at residues 161–183 (LRRPRRRRRPGSPSLHGGAYGER) and 304–395 (RSEG…QPSG). Coiled coils occupy residues 179–304 (AYGE…RGYR) and 453–495 (VEAE…LNIS).

The polypeptide is EF-hand and coiled-coil domain-containing protein 1 (Efcc1) (Mus musculus (Mouse)).